Reading from the N-terminus, the 289-residue chain is Signal peptidase I (289 aa).

At 1–43 (MKKLTSTTTTLWDNKLFINNLKNFMQTNTESNNNKTTAQEWKS) the chain is on the cytoplasmic side. The helical transmembrane segment at 44–64 (FILVVVIALMIRILIIESFVV) threads the bilayer. Topologically, residues 65–289 (PTGSMKATIL…IFRNLYSIED (225 aa)) are periplasmic. Residues Ser68 and Lys131 contribute to the active site.

Belongs to the peptidase S26 family.

It is found in the cell inner membrane. The enzyme catalyses Cleavage of hydrophobic, N-terminal signal or leader sequences from secreted and periplasmic proteins.. This chain is Signal peptidase I (lepB), found in Rickettsia bellii (strain OSU 85-389).